The chain runs to 132 residues: Small ribosomal subunit protein uS8 (132 aa).

The protein belongs to the universal ribosomal protein uS8 family. In terms of assembly, part of the 30S ribosomal subunit. Contacts proteins S5 and S12.

Functionally, one of the primary rRNA binding proteins, it binds directly to 16S rRNA central domain where it helps coordinate assembly of the platform of the 30S subunit. The polypeptide is Small ribosomal subunit protein uS8 (Exiguobacterium sp. (strain ATCC BAA-1283 / AT1b)).